The following is a 99-amino-acid chain: Small ribosomal subunit protein uS14m (99 aa).

The protein belongs to the universal ribosomal protein uS14 family.

It localises to the mitochondrion. This chain is Small ribosomal subunit protein uS14m (RPS14), found in Oenothera berteroana (Bertero's evening primrose).